Consider the following 169-residue polypeptide: Secreted LysM effector Blys5 (169 aa).

The signal sequence occupies residues 1–19; that stretch reads MKLSVISAVFVSLAAAAAA. 2 LysM domains span residues 47–94 and 121–167; these read TYYQ…YYCV and QWYK…NVCV.

This sequence belongs to the secreted LysM effector family.

Secreted effector that enables the plant pathogenic fungus to manipulate host defenses for successful infection. Required for the full virulence to infect insect hosts. Protects fungal hyphae against the hydrolytic activity of chitinase and plays an important role in evasion of insect immunities. Binds chitin and can additionally bind chitosan and cellulose. Coats and protects the cell walls of insect pathogens from host cell recognition and additionally shields fungal cells from the hydrolysis of insect chitinases. This chain is Secreted LysM effector Blys5, found in Beauveria bassiana (strain ARSEF 2860) (White muscardine disease fungus).